A 114-amino-acid chain; its full sequence is Large ribosomal subunit protein P1 (114 aa).

Positions Glu-55–Gly-114 are disordered. Over residues Glu-56 to Gly-69 the composition is skewed to low complexity. A compositionally biased stretch (acidic residues) spans Ser-70 to Ser-105.

The protein belongs to the eukaryotic ribosomal protein P1/P2 family. Part of the 50S ribosomal subunit. Homodimer, it forms part of the ribosomal stalk which helps the ribosome interact with GTP-bound translation factors. Forms a heptameric uL10/P0(P1)2(P1)2(P1)2 complex, where uL10/P0 forms an elongated spine to which the P1 dimers bind in a sequential fashion.

Functionally, forms part of the ribosomal stalk, playing a central role in the interaction of the ribosome with GTP-bound translation factors. The protein is Large ribosomal subunit protein P1 of Halobacterium salinarum (strain ATCC 700922 / JCM 11081 / NRC-1) (Halobacterium halobium).